Consider the following 528-residue polypeptide: Sulfhydryl oxidase 1 (528 aa).

The first 19 residues, 1 to 19 (MSLIHLFLLLGLLSLEAAA), serve as a signal peptide directing secretion. The region spanning 35 to 170 (NVADQKDNAI…LLNWINKQIG (136 aa)) is the Thioredoxin domain. A glycan (N-linked (GlcNAc...) asparagine) is linked at Asn47. Residues Cys72 and Cys75 each act as nucleophile in the active site. Cys72 and Cys75 form a disulfide bridge. N-linked (GlcNAc...) asparagine glycosylation is found at Asn186 and Asn297. The cysteines at positions 292 and 304 are disulfide-linked. The region spanning 295–397 (SKNETRGFSC…GDPKFPKMIW (103 aa)) is the ERV/ALR sulfhydryl oxidase domain. FAD contacts are provided by residues Arg300, Trp307, His311, Asp341, His345, 368–375 (WSTHNKVN), Lys394, and Trp397. Cys339 and Cys342 are joined by a disulfide. Cys403 and Cys406 are disulfide-bonded.

FAD serves as cofactor. As to expression, highly expressed in roots.

The protein resides in the secreted. It localises to the cell wall. The enzyme catalyses 2 R'C(R)SH + O2 = R'C(R)S-S(R)CR' + H2O2. In terms of biological role, sulfhydryl oxidase involved in the regulation of cation homeostasis. Positively regulates shoot accumulation of K(+) and inhibits accumulation of toxic cations. Acts at the level of root K(+) efflux systems involved in xylem loading (root symplast-xylem interface). This Arabidopsis thaliana (Mouse-ear cress) protein is Sulfhydryl oxidase 1 (QSOX1).